Here is a 729-residue protein sequence, read N- to C-terminus: Triadin (729 aa).

The interval 1–28 (MTEITAEGNASTTTTVIDSKNGSVPKSP) is disordered. Topologically, residues 1 to 47 (MTEITAEGNASTTTTVIDSKNGSVPKSPGKVLKRTVTEDIVTTFSSP) are cytoplasmic. Positions 8–24 (GNASTTTTVIDSKNGSV) are enriched in polar residues. A helical membrane pass occupies residues 48 to 68 (AAWLLVIALIITWSAVAIVMF). Residues 69-729 (DLVDYKNFSA…NSPGQKQQGQ (661 aa)) are Lumenal-facing. Asparagine 75 carries N-linked (GlcNAc...) asparagine glycosylation. Positions 117-129 (EDEEDDDGDEDTD) are enriched in acidic residues. Disordered regions lie at residues 117-265 (EDEE…EQKD), 281-682 (DLKP…PTKQ), and 705-729 (PFTP…QQGQ). Basic and acidic residues-rich tracts occupy residues 130 to 265 (KGEI…EQKD), 309 to 357 (LEEK…KASE), 371 to 433 (AKKD…KEEI), 444 to 509 (GKKE…EVKP), 516 to 531 (GKKE…KEAK), 538 to 562 (VQIH…EKVL), 580 to 598 (KKAE…DKPK), and 609 to 674 (ESGK…KEGT). Asparagine 647 carries an N-linked (GlcNAc...) asparagine glycan. The span at 715–729 (SSGQANSPGQKQQGQ) shows a compositional bias: polar residues.

Homooligomer of variable subunit number; disulfide-linked. Interacts with CASQ1 and RYR1 in skeletal muscle. Interacts with CASQ2. In terms of processing, phosphorylated by CaMK2. N-glycosylated.

It localises to the cell membrane. It is found in the sarcoplasmic reticulum membrane. Its function is as follows. Contributes to the regulation of lumenal Ca2+ release via the sarcoplasmic reticulum calcium release channels RYR1 and RYR2, a key step in triggering skeletal and heart muscle contraction. Required for normal organization of the triad junction, where T-tubules and the sarcoplasmic reticulum terminal cisternae are in close contact. Required for normal skeletal muscle strength. Plays a role in excitation-contraction coupling in the heart and in regulating the rate of heart beats. The chain is Triadin (TRDN) from Homo sapiens (Human).